Reading from the N-terminus, the 531-residue chain is ATP synthase subunit beta (531 aa).

Residues 1–48 (MVKAVTSSKETAKVEKKKSAPRSGVKKAVSKSQAGVKDSSSPVHKSSK) are disordered. A compositionally biased stretch (basic residues) spans 19–29 (SAPRSGVKKAV). The span at 30–44 (SKSQAGVKDSSSPVH) shows a compositional bias: polar residues. An ATP-binding site is contributed by 203 to 210 (GGAGVGKT).

Belongs to the ATPase alpha/beta chains family. As to quaternary structure, F-type ATPases have 2 components, CF(1) - the catalytic core - and CF(0) - the membrane proton channel. CF(1) has five subunits: alpha(3), beta(3), gamma(1), delta(1), epsilon(1). CF(0) has three main subunits: a(1), b(2) and c(9-12). The alpha and beta chains form an alternating ring which encloses part of the gamma chain. CF(1) is attached to CF(0) by a central stalk formed by the gamma and epsilon chains, while a peripheral stalk is formed by the delta and b chains.

It is found in the cell inner membrane. The enzyme catalyses ATP + H2O + 4 H(+)(in) = ADP + phosphate + 5 H(+)(out). In terms of biological role, produces ATP from ADP in the presence of a proton gradient across the membrane. The catalytic sites are hosted primarily by the beta subunits. In Bartonella henselae (strain ATCC 49882 / DSM 28221 / CCUG 30454 / Houston 1) (Rochalimaea henselae), this protein is ATP synthase subunit beta.